The primary structure comprises 526 residues: Fusicoccadiene 8-ol C-16-hydroxylase (526 aa).

Residues 34-56 (AFVGFSVLGLTLLFSKLFYNAYL) form a helical membrane-spanning segment. Residues N309, N418, and N434 are each glycosylated (N-linked (GlcNAc...) asparagine). Position 470 (C470) interacts with heme.

This sequence belongs to the cytochrome P450 family. Heme is required as a cofactor.

The protein resides in the membrane. Its pathway is mycotoxin biosynthesis. Functionally, cytochrome P450 monooxygenase; part of the 2 gene clusters that mediate the biosynthesis of fusicoccins, diterpene glucosides that display phytohormone-like activity and function as potent activators of plasma membrane H(+)-ATPases in plants by modifying 14-3-3 proteins and cause the plant disease constriction canker. The first step in the pathway is performed by the fusicoccadiene synthase PaFS that possesses both prenyl transferase and terpene cyclase activity, converting isopentenyl diphosphate and dimethylallyl diphosphate into geranylgeranyl diphosphate (GGDP) and successively converting GGDP into fusicocca-2,10(14)-diene, a precursor for fusicoccin H. The second step is the oxidation at the C-8 position by the cytochrome P450 monooxygenase PaP450-2 to yield fusicocca-2,10(14)-diene-8-beta-ol. The cytochrome P450 monooxygenase PaP450-1 then catalyzes the hydroxylation at the C-16 position to produce fusicocca-2,10(14)-diene-8-beta,16-diol. The dioxygenase fc-dox then catalyzes the 16-oxydation of fusicocca-2,10(14)-diene-8-beta,16-diol to yield an aldehyde (8-beta-hydroxyfusicocca-1,10(14)-dien-16-al). The short-chain dehydrogenase/reductase fc-sdr catalyzes the reduction of the aldehyde to yield fusicocca-1,10(14)-diene-8-beta,16-diol. The next step is the hydroxylation at C-9 performed by the cytochrome P450 monooxygenase PaP450-3 that leads to fusicoccin H aglycon which is glycosylated to fusicoccin H by the O-glycosyltransferase PaGT. Hydroxylation at C-12 by the cytochrome P450 monooxygenase PaP450-4 leads then to the production of fusicoccin Q and is followed by methylation by the O-methyltransferase PaMT to yield fusicoccin P. Fusicoccin P is further converted to fusicoccin J via prenylation by the O-glucose prenyltransferase PaPT. Cytochrome P450 monooxygenase PaP450-5 then performs hydroxylation at C-19 to yield dideacetyl-fusicoccin A which is acetylated to 3'-O-deacetyl-fusicoccin A by the O-acetyltransferase PaAT-2. Finally, a another acetylation by the O-acetyltransferase PaAT-1 yields fusicoccin A. The polypeptide is Fusicoccadiene 8-ol C-16-hydroxylase (Phomopsis amygdali (Fusicoccum amygdali)).